The following is a 296-amino-acid chain: tRNA dimethylallyltransferase (296 aa).

19-26 (GPTASGKS) contacts ATP. Position 21–26 (21–26 (TASGKS)) interacts with substrate.

The protein belongs to the IPP transferase family. Monomer. Mg(2+) serves as cofactor.

It catalyses the reaction adenosine(37) in tRNA + dimethylallyl diphosphate = N(6)-dimethylallyladenosine(37) in tRNA + diphosphate. In terms of biological role, catalyzes the transfer of a dimethylallyl group onto the adenine at position 37 in tRNAs that read codons beginning with uridine, leading to the formation of N6-(dimethylallyl)adenosine (i(6)A). The chain is tRNA dimethylallyltransferase from Dinoroseobacter shibae (strain DSM 16493 / NCIMB 14021 / DFL 12).